The chain runs to 297 residues: Phosphatidylinositol N-acetylglucosaminyltransferase subunit C (297 aa).

Transmembrane regions (helical) follow at residues Val-51–Ile-71, Leu-80–Phe-100, Trp-117–Leu-137, Ser-153–Val-173, Ser-174–Pro-194, Ser-196–Leu-216, Ser-227–Leu-244, and Gly-250–Ile-270.

Belongs to the PIGC family. As to quaternary structure, component of the glycosylphosphatidylinositol-N-acetylglucosaminyltransferase (GPI-GnT) complex composed at least by PIGA, PIGC, PIGH, PIGP, PIGQ, PIGY and DPM2. Interacts with PIGQ. Interacts with the heterodimer PIGA:PIGH.

It localises to the endoplasmic reticulum membrane. Its pathway is glycolipid biosynthesis; glycosylphosphatidylinositol-anchor biosynthesis. Functionally, part of the glycosylphosphatidylinositol-N-acetylglucosaminyltransferase (GPI-GnT) complex that catalyzes the transfer of N-acetylglucosamine from UDP-N-acetylglucosamine to phosphatidylinositol and participates in the first step of GPI biosynthesis. This Homo sapiens (Human) protein is Phosphatidylinositol N-acetylglucosaminyltransferase subunit C.